The chain runs to 339 residues: Ketol-acid reductoisomerase (NADP(+)) (339 aa).

The 182-residue stretch at 1 to 182 folds into the KARI N-terminal Rossmann domain; the sequence is MRVYYDRDAD…GGGRAGIIET (182 aa). NADP(+) is bound by residues 24–27, R48, S51, T53, and 83–86; these read YGSQ and DELQ. The active site involves H108. G134 contributes to the NADP(+) binding site. Residues 183–328 form the KARI C-terminal knotted domain; that stretch reads TFKEECETDL…AKLRGMMPWI (146 aa). D191, E195, E227, and E231 together coordinate Mg(2+). S252 is a substrate binding site.

This sequence belongs to the ketol-acid reductoisomerase family. Mg(2+) is required as a cofactor.

It catalyses the reaction (2R)-2,3-dihydroxy-3-methylbutanoate + NADP(+) = (2S)-2-acetolactate + NADPH + H(+). It carries out the reaction (2R,3R)-2,3-dihydroxy-3-methylpentanoate + NADP(+) = (S)-2-ethyl-2-hydroxy-3-oxobutanoate + NADPH + H(+). Its pathway is amino-acid biosynthesis; L-isoleucine biosynthesis; L-isoleucine from 2-oxobutanoate: step 2/4. It participates in amino-acid biosynthesis; L-valine biosynthesis; L-valine from pyruvate: step 2/4. Its function is as follows. Involved in the biosynthesis of branched-chain amino acids (BCAA). Catalyzes an alkyl-migration followed by a ketol-acid reduction of (S)-2-acetolactate (S2AL) to yield (R)-2,3-dihydroxy-isovalerate. In the isomerase reaction, S2AL is rearranged via a Mg-dependent methyl migration to produce 3-hydroxy-3-methyl-2-ketobutyrate (HMKB). In the reductase reaction, this 2-ketoacid undergoes a metal-dependent reduction by NADPH to yield (R)-2,3-dihydroxy-isovalerate. The protein is Ketol-acid reductoisomerase (NADP(+)) of Methylorubrum populi (strain ATCC BAA-705 / NCIMB 13946 / BJ001) (Methylobacterium populi).